Here is a 315-residue protein sequence, read N- to C-terminus: Olfactory receptor 3A1 (315 aa).

Over 1–28 (MQPESGANGTVIAEFILLGLLEAPGLQP) the chain is Extracellular. N-linked (GlcNAc...) asparagine glycosylation occurs at Asn-8. Residues 29–52 (VVFVLFLFAYLVTVGGNLSILAAV) form a helical membrane-spanning segment. Over 53–60 (LVEPELHT) the chain is Cytoplasmic. A helical membrane pass occupies residues 61–82 (PMYFFLGNLSVLDVGCISVTVP). Topologically, residues 83–103 (SMLSRLLSRKRAVPCGACLTQ) are extracellular. A disulfide bridge links Cys-100 with Cys-192. A helical membrane pass occupies residues 104-123 (LFFFHLFVGVDCFLLIAMAY). Topologically, residues 124-143 (DRFLAICRPLTYSTRMSQTV) are cytoplasmic. Residues 144–161 (QRMLVAASWACAFTNALT) form a helical membrane-spanning segment. The Extracellular portion of the chain corresponds to 162-199 (HTVAMSTLNFCGPNVINHFYCDLPQLCQLSCSSTQLSE). Residues 200-223 (LLLFAVGFIMAGTSMALIVISYIH) traverse the membrane as a helical segment. Residues 224-240 (VAAAVLRIRSVEGRKKA) are Cytoplasmic-facing. Residues 241 to 264 (FSTCGSHLTVVAIFYGSGIFNYMR) traverse the membrane as a helical segment. Topologically, residues 265-275 (LGSTKLSDKDK) are extracellular. Residues 276-295 (AVGIFNTVINPMLNPIIYSF) form a helical membrane-spanning segment. The Cytoplasmic segment spans residues 296–315 (RNPDVQSAIWRMLTGRRSLA).

Belongs to the G-protein coupled receptor 1 family.

Its subcellular location is the cell membrane. Functionally, odorant receptor. The polypeptide is Olfactory receptor 3A1 (OR3A1) (Gorilla gorilla gorilla (Western lowland gorilla)).